Consider the following 199-residue polypeptide: Early nodulin-like protein 3 (199 aa).

The signal sequence occupies residues 1–23 (MGLVMRFDLYLMFVMLMGLGFTI). A Phytocyanin domain is found at 27 to 128 (YKFYVGGKDG…GQKLAVKVLS (102 aa)). N-linked (GlcNAc...) asparagine glycans are attached at residues N57 and N83. Residues C82 and C116 are joined by a disulfide bond. The interval 130–180 (VHHSHSPRHTSPSPSPVHQELSSPGPSPGVEPSSDSNSRVPAPGPATAPNS) is disordered. Positions 138-165 (HTSPSPSPVHQELSSPGPSPGVEPSSDS) are enriched in low complexity. N179 carries the GPI-anchor amidated asparagine lipid modification. The propeptide at 180-199 (SAGLVGPGMVVLVIMISSLF) is removed in mature form.

Belongs to the early nodulin-like (ENODL) family. Confined to flowers.

It localises to the cell membrane. Its function is as follows. May act as a carbohydrate transporter. The sequence is that of Early nodulin-like protein 3 from Arabidopsis thaliana (Mouse-ear cress).